Consider the following 367-residue polypeptide: Lipoyl synthase 2, chloroplastic (367 aa).

[4Fe-4S] cluster contacts are provided by cysteine 84, cysteine 89, cysteine 95, cysteine 121, cysteine 125, cysteine 128, and serine 336. The Radical SAM core domain occupies 104-325 (GEGDGIATAT…KEYGESVGFR (222 aa)).

It belongs to the radical SAM superfamily. Lipoyl synthase family. [4Fe-4S] cluster serves as cofactor.

The protein localises to the plastid. It is found in the chloroplast. The enzyme catalyses [[Fe-S] cluster scaffold protein carrying a second [4Fe-4S](2+) cluster] + N(6)-octanoyl-L-lysyl-[protein] + 2 oxidized [2Fe-2S]-[ferredoxin] + 2 S-adenosyl-L-methionine + 4 H(+) = [[Fe-S] cluster scaffold protein] + N(6)-[(R)-dihydrolipoyl]-L-lysyl-[protein] + 4 Fe(3+) + 2 hydrogen sulfide + 2 5'-deoxyadenosine + 2 L-methionine + 2 reduced [2Fe-2S]-[ferredoxin]. Its pathway is protein modification; protein lipoylation via endogenous pathway; protein N(6)-(lipoyl)lysine from octanoyl-[acyl-carrier-protein]: step 2/2. Functionally, catalyzes the radical-mediated insertion of two sulfur atoms into the C-6 and C-8 positions of the octanoyl moiety bound to the lipoyl domains of lipoate-dependent enzymes, thereby converting the octanoylated domains into lipoylated derivatives. This chain is Lipoyl synthase 2, chloroplastic, found in Zea mays (Maize).